A 293-amino-acid chain; its full sequence is MSNDEINQNEEKVKRTPPLPPVPEGMSKKQWKKMCKRQRWEENKAKYNAERRVKKKRLRHERSAKIQEYIDRGEEVPQELIREPRINVNQTDSGIEIILDCSFDELMNDKEIVSLSNQVTRAYSANRRANHFAEIKVAPFDKRLKQRFETTLKNTNYENWNHFKFLPDDKIMFGDEHISKDKIVYLTADTEEKLEKLEPGMRYIVGGIVDKNRYKELCLKKAQKMGIPTRRLPIDEYINLEGRRVLTTTHVVQLMLKYFDDHNWKNAFESVLPPRKLDAEAKSASSSPAPKDT.

Positions Met-1–Trp-31 are disordered. Phosphothreonine is present on Thr-16. Residues Lys-32–Glu-61 are a coiled coil. The SAM-dependent MTase TRM10-type domain maps to Glu-83–Ala-279. S-adenosyl-L-methionine-binding positions include Leu-186 to Thr-187, Gly-206, Asp-210 to Tyr-214, Cys-218, Leu-232, and Arg-244 to Leu-246. Asp-210 (proton acceptor) is an active-site residue. Ser-283 carries the phosphoserine modification.

The protein belongs to the class IV-like SAM-binding methyltransferase superfamily. TRM10 family. As to quaternary structure, monomer.

Its subcellular location is the cytoplasm. It is found in the nucleus. The catalysed reaction is guanosine(9) in tRNA + S-adenosyl-L-methionine = N(1)-methylguanosine(9) in tRNA + S-adenosyl-L-homocysteine + H(+). Its function is as follows. S-adenosyl-L-methionine-dependent guanine N(1)-methyltransferase that catalyzes the formation of N(1)-methylguanine at position 9 (m1G9) in cytoplasmic tRNAs. The chain is tRNA (guanine(9)-N1)-methyltransferase from Saccharomyces cerevisiae (strain ATCC 204508 / S288c) (Baker's yeast).